Here is a 594-residue protein sequence, read N- to C-terminus: UvrABC system protein C (594 aa).

Positions 14-91 (DSPGCYLHKD…IQENMPKYNI (78 aa)) constitute a GIY-YIG domain. A UVR domain is found at 196-231 (DKIIDDLRSKMLEASHNQEFERAAEYRDLISGIATM).

This sequence belongs to the UvrC family. As to quaternary structure, interacts with UvrB in an incision complex.

It is found in the cytoplasm. The UvrABC repair system catalyzes the recognition and processing of DNA lesions. UvrC both incises the 5' and 3' sides of the lesion. The N-terminal half is responsible for the 3' incision and the C-terminal half is responsible for the 5' incision. The chain is UvrABC system protein C from Streptococcus equi subsp. zooepidemicus (strain H70).